A 762-amino-acid chain; its full sequence is 5-methyltetrahydropteroyltriglutamate--homocysteine methyltransferase (762 aa).

5-methyltetrahydropteroyltri-L-glutamate is bound by residues 17-20 and Lys111; that span reads REWK. L-homocysteine contacts are provided by residues 435–437 and Glu488; that span reads IGS. L-methionine is bound by residues 435-437 and Glu488; that span reads IGS. Residues 519-520 and Trp565 each bind 5-methyltetrahydropteroyltri-L-glutamate; that span reads RC. L-homocysteine is bound at residue Asp603. Asp603 lines the L-methionine pocket. Glu609 is a 5-methyltetrahydropteroyltri-L-glutamate binding site. Positions 645, 647, and 669 each coordinate Zn(2+). Catalysis depends on His698, which acts as the Proton donor. Cys730 is a Zn(2+) binding site.

Belongs to the vitamin-B12 independent methionine synthase family. Zn(2+) is required as a cofactor.

The enzyme catalyses 5-methyltetrahydropteroyltri-L-glutamate + L-homocysteine = tetrahydropteroyltri-L-glutamate + L-methionine. Its pathway is amino-acid biosynthesis; L-methionine biosynthesis via de novo pathway; L-methionine from L-homocysteine (MetE route): step 1/1. In terms of biological role, catalyzes the transfer of a methyl group from 5-methyltetrahydrofolate to homocysteine resulting in methionine formation. The polypeptide is 5-methyltetrahydropteroyltriglutamate--homocysteine methyltransferase (Bacillus anthracis (strain A0248)).